Here is an 88-residue protein sequence, read N- to C-terminus: Exodeoxyribonuclease 7 small subunit (88 aa).

Positions Ala69 to Ala88 are disordered.

The protein belongs to the XseB family. Heterooligomer composed of large and small subunits.

Its subcellular location is the cytoplasm. It carries out the reaction Exonucleolytic cleavage in either 5'- to 3'- or 3'- to 5'-direction to yield nucleoside 5'-phosphates.. Bidirectionally degrades single-stranded DNA into large acid-insoluble oligonucleotides, which are then degraded further into small acid-soluble oligonucleotides. The polypeptide is Exodeoxyribonuclease 7 small subunit (Streptomyces coelicolor (strain ATCC BAA-471 / A3(2) / M145)).